Here is a 473-residue protein sequence, read N- to C-terminus: Phosphatidylserine synthase 1 (473 aa).

N-acetylalanine is present on alanine 2. The Cytoplasmic portion of the chain corresponds to 2 to 35 (ASCVGSRTLSKDDVNYRMHFRMINEQQVEDITID). Residues 36 to 56 (FFYRPHTITLLSFTIISLMYF) form a helical membrane-spanning segment. Topologically, residues 57–72 (AFTRDDSVPEDNIWRG) are lumenal. The chain crosses the membrane as a helical span at residues 73–93 (ILSVIFFFLIISVLAFPNGPF). The Cytoplasmic portion of the chain corresponds to 94-102 (TRPHPALWR). A helical membrane pass occupies residues 103–123 (MVFGLSVLYFLFLVFLLFLNF). The Lumenal segment spans residues 124 to 186 (EQVKSLMYWL…AMKALLIRSY (63 aa)). A helical transmembrane segment spans residues 187-207 (GLCWTISITWELTELFFMHLL). Residues 208-216 (PNFAECWWD) lie on the Cytoplasmic side of the membrane. Residues 217 to 237 (QVILDILLCNGGGIWLGMVVC) traverse the membrane as a helical segment. Residues 238 to 286 (RFLEMRTYHWASFKDIHTTTGKIKRAVLQFTPASWTYVRWFDPKSSFQR) lie on the Lumenal side of the membrane. A helical membrane pass occupies residues 287–307 (VAGIYLFMIIWQLTELNTFFL). The Cytoplasmic segment spans residues 308 to 319 (KHIFVFQASHPL). The chain crosses the membrane as a helical span at residues 320–342 (SWGRILFIGCITAPTVRQYYAYL). Topologically, residues 343-355 (TDTQCKRVGTQCW) are lumenal. The helical transmembrane segment at 356 to 376 (VFGVIGFLEAIVCIKFGQDLF) threads the bilayer. Topologically, residues 377 to 383 (SKTQILY) are cytoplasmic. The helical transmembrane segment at 384–404 (VMLWLLCVAFTTFLCLYGMVW) threads the bilayer. The Lumenal portion of the chain corresponds to 405–473 (YAEHYGHREK…SKVTNGVGKK (69 aa)). A phosphoserine mark is found at serine 417, serine 425, serine 442, and serine 454. A disordered region spans residues 428–473 (ISWHHGKGSKGSEDSPPKHSSNHESHSSRRRNRHSKSKVTNGVGKK). Residues 437 to 454 (KGSEDSPPKHSSNHESHS) show a composition bias toward basic and acidic residues. The segment covering 455–464 (SRRRNRHSKS) has biased composition (basic residues).

Belongs to the phosphatidyl serine synthase family. As to expression, expressed in kidney, testis, lung, skeletal muscle, liver brain, heart and spleen with highest expression in testis, liver, heart and brain.

The protein localises to the endoplasmic reticulum membrane. The catalysed reaction is a 1,2-diacyl-sn-glycero-3-phosphoethanolamine + L-serine = a 1,2-diacyl-sn-glycero-3-phospho-L-serine + ethanolamine. The enzyme catalyses a 1,2-diacyl-sn-glycero-3-phosphocholine + L-serine = a 1,2-diacyl-sn-glycero-3-phospho-L-serine + choline. Its pathway is phospholipid metabolism; phosphatidylserine biosynthesis. Its activity is regulated as follows. Potently inhibited by choline in the mitochondria-associated membrane (MAM). Very little inhibition by choline in the endoplasmic reticulum (ER) per se. Catalyzes a base-exchange reaction in which the polar head group of phosphatidylethanolamine (PE) or phosphatidylcholine (PC) is replaced by L-serine. Catalyzes mainly the conversion of phosphatidylcholine. Also converts, in vitro and to a lesser extent, phosphatidylethanolamine. This Mus musculus (Mouse) protein is Phosphatidylserine synthase 1 (Ptdss1).